Reading from the N-terminus, the 217-residue chain is MEIERINEDTIKFYISYLDLEERGFNQEDVWYDREKSEELFWDMMDELKYEEEFSPEGPLWIQVQALKHGLEVFVTKATIGGKGEDGFDVTLSSPDELAEEKIEKLLEENFNPVKKEALGEDDTLEFILEFRDFEDAISLSRATGLENLVTKLYSYQGKYYLNVEFPENKYDESNIDNAVSILLEYGLESNLTGYMLAEYGKVIFDVPALKQIRKHF.

It belongs to the MecA family. Homodimer.

Its function is as follows. Enables the recognition and targeting of unfolded and aggregated proteins to the ClpC protease or to other proteins involved in proteolysis. This Listeria monocytogenes serovar 1/2a (strain ATCC BAA-679 / EGD-e) protein is Adapter protein MecA.